Here is a 361-residue protein sequence, read N- to C-terminus: Fructose-bisphosphate aldolase (361 aa).

A D-glyceraldehyde 3-phosphate-binding site is contributed by Ser-63. The active-site Proton donor is the Asp-110. The Zn(2+) site is built by His-111, Asp-145, Glu-175, and His-227. Gly-228 provides a ligand contact to dihydroxyacetone phosphate. His-266 provides a ligand contact to Zn(2+). Residues 267 to 269 and 288 to 291 each bind dihydroxyacetone phosphate; these read GGS and NLDT.

The protein belongs to the class II fructose-bisphosphate aldolase family. As to quaternary structure, homodimer. It depends on Zn(2+) as a cofactor.

The enzyme catalyses beta-D-fructose 1,6-bisphosphate = D-glyceraldehyde 3-phosphate + dihydroxyacetone phosphate. The protein operates within carbohydrate degradation; glycolysis; D-glyceraldehyde 3-phosphate and glycerone phosphate from D-glucose: step 4/4. Catalyzes the aldol condensation of dihydroxyacetone phosphate (DHAP or glycerone-phosphate) with glyceraldehyde 3-phosphate (G3P) to form fructose 1,6-bisphosphate (FBP) in gluconeogenesis and the reverse reaction in glycolysis. The protein is Fructose-bisphosphate aldolase (FBA1) of Kluyveromyces lactis (strain ATCC 8585 / CBS 2359 / DSM 70799 / NBRC 1267 / NRRL Y-1140 / WM37) (Yeast).